A 944-amino-acid polypeptide reads, in one-letter code: MTTNSKSLNLLQSLTCGICQNLFKDPNTLIPCGHAFCLDCLTTNASIKNCIQCKVEYTTYIPNHPLKQMIDCLDQSSNNNNSNNNSNGENTNNNNNIINNERSSFNGSNSNSIIGFIEGLSDSTSNGRRFSQQDGLRYSSGLLDGSNSGGSNNIRYCMEHYEHYYAFCNDCQAPVCPSCLLTTHNRHGMIPLTKDSIATKMKEYRDIVQSFKTKMSQYKDNITLYQKEIELLDSTFLQCKQSIQLMISNLHKVLKSRETYLLKEISSIHYASHMELTDRSSTLENEISEMEKLIGNGTDKFKDATEILNNQNLKFEFLEQFHHSRTQSKKNQNQDGLKPLFKTDLLFYKANNERVTEMINGTLGNISLLTFPLDDIGEVNIWDEPKENICIEKVRTNSNGIEEFEVKYGSLNKLIERLCLPNCYDDNYVNIFLLTYHSFCSSKKLLKKLIERFTIPEDLEAHGLTLASIHEIHMKIRSVLVKWINEYSPKFDQDTIHLFQNFNCRMQSEYTSIQEIENLLLNSNENSPSITSSQSLSSQSLYSQTNNNNNNNNNNSNNLQPTIQTNQTLSSNINNITISNLNNSNLTNNGTCKIQNSPPKNYQQSNYSSIFNGPSSSSSSSPSSPILSLNSLALINGNDNLVFESPLNSPRNNNNNNNNNSPRSSSFGASSALKFNSNNNSLNINSNMGGPYFPSPSSPTTNNIPNINHFSSRILSSSKNLEFNDIDEFEIAKQLTLIEFENFGRIKPIDLLTCVDLKHKTPHITNIMERFHNISTWVSTTIVRGENLKNRVKIVNKFIKIAEHLKNLNNFNSLTAILVAIQRSTVTKKDLVKQSVKIITDLEKLMSSDDSYSTYRTRLAQCSPPCVPYISIYLQDIMDLEKKNPSNIIVQTSSNKTQEFINFTRRSLISKVILDLASYQRFGYSTILPISNIQEYLNVHIDEL.

The segment at 16–54 (CGICQNLFKDPNTLIPCGHAFCLDCLTTNASIKNCIQCK) adopts an RING-type zinc-finger fold. The tract at residues 80 to 102 (NNSNNNSNGENTNNNNNIINNER) is disordered. Residues 152 to 192 (NNIRYCMEHYEHYYAFCNDCQAPVCPSCLLTTHNRHGMIPL) form a B box-type zinc finger. Positions 157, 160, 179, and 184 each coordinate Zn(2+). Coiled coils occupy residues 200–234 (KMKE…LLDS) and 271–303 (ASHM…KFKD). The N-terminal Ras-GEF domain occupies 402 to 528 (EEFEVKYGSL…LLLNSNENSP (127 aa)). Disordered stretches follow at residues 530–562 (ITSS…LQPT), 587–623 (TNNG…SSPS), and 644–670 (ESPL…FGAS). Polar residues predominate over residues 590-604 (GTCKIQNSPPKNYQQ). Composition is skewed to low complexity over residues 605–623 (SNYS…SSPS) and 648–670 (NSPR…FGAS). A Ras-GEF domain is found at 727-944 (DEFEIAKQLT…EYLNVHIDEL (218 aa)).

Promotes the exchange of Ras-bound GDP by GTP. This is Ras guanine nucleotide exchange factor O (gefO) from Dictyostelium discoideum (Social amoeba).